Reading from the N-terminus, the 333-residue chain is Homeobox protein engrailed-2 (333 aa).

Disordered stretches follow at residues 1 to 49, 95 to 206, and 223 to 250; these read MEEN…RALM, GRGG…GANL, and SDRP…PRTA. Gly residues-rich tracts occupy residues 25–36 and 95–117; these read PGGGSGGGGGSS and GRGG…GAGG. 2 stretches are compositionally biased toward low complexity: residues 142-151 and 191-200; these read PLPAAGSDSP and LSVSSDSDSS. A DNA-binding region (homeobox) is located at residues 244 to 303; that stretch reads DKRPRTAFTAEQLQRLKAEFQTNRYLTEQRRQSLAQELSLNESQIKIWFQNKRAKIKKAT.

Belongs to the engrailed homeobox family.

Its subcellular location is the nucleus. In Homo sapiens (Human), this protein is Homeobox protein engrailed-2 (EN2).